The chain runs to 613 residues: MSKIIGIDLGTTNSCVAVLEGGEPKVIANAEGARTTPSVVAFKNGERQVGEVAKRQSITNPNTIMSVKRHMGTDYKVEVEGKNYTPQEISAIILQHLKSYAEGYLGEEVTKAVITVPAYFNDAERQATKDAGKIAGLEVERIINEPTAAALAYGLDKTDEDQTILVYDLGGGTFDVSVLELGDGVFEVRSTAGDNRLGGDDFDQVIIDHLVAEFKKENGIDLSKDKMALQRLKDAAEKAKKDLSGVSSTQISLPFITAGDAGPLHLELTLTRAKFEELSADLVERTMTPVRQSLKDAGLSASEIDKVILVGGSTRIPAVQEAIKKETGKEPHKGVNPDEVVALGAAIQGGVITGDVKDVVLLDVTPLSLGIETMGGVFTKLIERNTTIPTSKSQVFSTAADNQTAVDIHVLQGERPMAADNKTLGRFQLTDIPPAPRGVPQIEVSFDIDKNGIVNVRAKDMGTGKEQNITIKSSSGLSDDEIEKMVKEAEENAEADAKKKEEIEVRNEADQLVFTTEKTLKDLEGKIDEEQVKKANDAKDALKAAIEKGELEDIKAKKDELQTIVQELTTKLYEEAAKQAQAQQEGGAEGAQKADDNVVDAEYEEVNDDQEKK.

Position 173 is a phosphothreonine; by autocatalysis (Thr-173). Residues 577–613 (AKQAQAQQEGGAEGAQKADDNVVDAEYEEVNDDQEKK) form a disordered region. Residues 597–613 (NVVDAEYEEVNDDQEKK) are compositionally biased toward acidic residues.

This sequence belongs to the heat shock protein 70 family.

Its function is as follows. Acts as a chaperone. The polypeptide is Chaperone protein DnaK (Bacillus pumilus (strain SAFR-032)).